The primary structure comprises 100 residues: Urease subunit gamma (100 aa).

The protein belongs to the urease gamma subunit family. As to quaternary structure, heterotrimer of UreA (gamma), UreB (beta) and UreC (alpha) subunits. Three heterotrimers associate to form the active enzyme.

The protein resides in the cytoplasm. It carries out the reaction urea + 2 H2O + H(+) = hydrogencarbonate + 2 NH4(+). The protein operates within nitrogen metabolism; urea degradation; CO(2) and NH(3) from urea (urease route): step 1/1. The protein is Urease subunit gamma of Cereibacter sphaeroides (strain ATCC 17029 / ATH 2.4.9) (Rhodobacter sphaeroides).